A 333-amino-acid chain; its full sequence is Extracellular globin (333 aa).

The N-terminal stretch at 1–18 (MHSSIVLAIVLFVAIASA) is a signal peptide. 2 consecutive Globin domains span residues 25–167 (CMKS…HHGR) and 174–318 (CMNS…KHAK). Residues Gln-82 and His-114 each contribute to the heme b site. The N-linked (GlcNAc...) asparagine glycan is linked to Asn-216. Residues Gln-231 and His-263 each coordinate heme b. Residues 314-333 (DKHAKAEKDHHEGEHKEEHH) are disordered.

This sequence belongs to the globin family. Homooctamer.

The protein localises to the secreted. It is found in the extracellular space. This Pseudoterranova decipiens (Sealworm) protein is Extracellular globin.